The chain runs to 425 residues: Serine--tRNA ligase 2 (425 aa).

An L-serine-binding site is contributed by 234-236 (TAE). 265 to 267 (RVE) serves as a coordination point for ATP. Glu-288 serves as a coordination point for L-serine. 352 to 355 (EVSS) lines the ATP pocket. Ser-388 is an L-serine binding site.

Belongs to the class-II aminoacyl-tRNA synthetase family. Type-1 seryl-tRNA synthetase subfamily. Homodimer. The tRNA molecule binds across the dimer.

The protein resides in the cytoplasm. The enzyme catalyses tRNA(Ser) + L-serine + ATP = L-seryl-tRNA(Ser) + AMP + diphosphate + H(+). It carries out the reaction tRNA(Sec) + L-serine + ATP = L-seryl-tRNA(Sec) + AMP + diphosphate + H(+). The protein operates within aminoacyl-tRNA biosynthesis; selenocysteinyl-tRNA(Sec) biosynthesis; L-seryl-tRNA(Sec) from L-serine and tRNA(Sec): step 1/1. Catalyzes the attachment of serine to tRNA(Ser). Is also able to aminoacylate tRNA(Sec) with serine, to form the misacylated tRNA L-seryl-tRNA(Sec), which will be further converted into selenocysteinyl-tRNA(Sec). This Clostridium acetobutylicum (strain ATCC 824 / DSM 792 / JCM 1419 / IAM 19013 / LMG 5710 / NBRC 13948 / NRRL B-527 / VKM B-1787 / 2291 / W) protein is Serine--tRNA ligase 2.